A 299-amino-acid chain; its full sequence is Tyrosine recombinase XerC (299 aa).

One can recognise a Core-binding (CB) domain in the interval methionine 1–asparagine 85. The 180-residue stretch at arginine 106 to aspartate 285 folds into the Tyr recombinase domain. Active-site residues include arginine 146, lysine 170, histidine 237, arginine 240, and histidine 263. Catalysis depends on tyrosine 272, which acts as the O-(3'-phospho-DNA)-tyrosine intermediate.

It belongs to the 'phage' integrase family. XerC subfamily. In terms of assembly, forms a cyclic heterotetrameric complex composed of two molecules of XerC and two molecules of XerD.

It localises to the cytoplasm. Site-specific tyrosine recombinase, which acts by catalyzing the cutting and rejoining of the recombining DNA molecules. The XerC-XerD complex is essential to convert dimers of the bacterial chromosome into monomers to permit their segregation at cell division. It also contributes to the segregational stability of plasmids. The chain is Tyrosine recombinase XerC from Pseudomonas putida (strain ATCC 700007 / DSM 6899 / JCM 31910 / BCRC 17059 / LMG 24140 / F1).